Consider the following 346-residue polypeptide: Melanoma-associated antigen B4 (346 aa).

The span at 1 to 18 (MPRGQKSKLRAREKRQRT) shows a compositional bias: basic residues. The disordered stretch occupies residues 1 to 107 (MPRGQKSKLR…STSTERSLKD (107 aa)). The span at 45-54 (VLRDTASSSL) shows a compositional bias: polar residues. Residues 92-101 (ASSSQASTST) are compositionally biased toward low complexity. The MAGE domain maps to 109–307 (LTRKTKMLVQ…NNFPLLYEEA (199 aa)). The disordered stretch occupies residues 311–346 (EEERAGARPRVAARRGTTAMTSAYSRATSSSSSQPM). Residues 318 to 346 (RPRVAARRGTTAMTSAYSRATSSSSSQPM) show a composition bias toward low complexity.

As to expression, expressed in testis.

It is found in the cytoplasm. This chain is Melanoma-associated antigen B4 (MAGEB4), found in Homo sapiens (Human).